The primary structure comprises 708 residues: ATP-dependent DNA helicase Hel308 (708 aa).

The Q motif signature appears at 1–29 (MSIDDLKLPSNVIDIIKNRGIKKLNPPQT). ATP is bound by residues Gln-28 and 46-53 (SPTGSGKT). The region spanning 33 to 196 (KKGLLDGNRL…WLGAEPVATN (164 aa)) is the Helicase ATP-binding domain. The DEAH box motif lies at 145 to 148 (DELH). Positions 229–435 (HGDDAIIAYT…ERAFYTFLLG (207 aa)) constitute a Helicase C-terminal domain.

This sequence belongs to the helicase family. Hel308 subfamily. Monomer.

It catalyses the reaction Couples ATP hydrolysis with the unwinding of duplex DNA by translocating in the 3'-5' direction.. The catalysed reaction is ATP + H2O = ADP + phosphate + H(+). Its function is as follows. DNA-dependent ATPase and 3'-5' DNA helicase that may be involved in repair of stalled replication forks. This chain is ATP-dependent DNA helicase Hel308, found in Saccharolobus solfataricus (strain ATCC 35092 / DSM 1617 / JCM 11322 / P2) (Sulfolobus solfataricus).